The chain runs to 795 residues: Phenylalanine--tRNA ligase beta subunit (795 aa).

The region spanning 39–148 (AGEFNGVVVG…ADAPVGKDFR (110 aa)) is the tRNA-binding domain. The 76-residue stretch at 401 to 476 (PKLNKVQLRR…RIYGYNSIPN (76 aa)) folds into the B5 domain. Asp-454, Asp-460, Glu-463, and Glu-464 together coordinate Mg(2+). The 94-residue stretch at 701–794 (SKFPANKRDL…LKDRFNAYLR (94 aa)) folds into the FDX-ACB domain.

Belongs to the phenylalanyl-tRNA synthetase beta subunit family. Type 1 subfamily. In terms of assembly, tetramer of two alpha and two beta subunits. The cofactor is Mg(2+).

The protein localises to the cytoplasm. It catalyses the reaction tRNA(Phe) + L-phenylalanine + ATP = L-phenylalanyl-tRNA(Phe) + AMP + diphosphate + H(+). The polypeptide is Phenylalanine--tRNA ligase beta subunit (Mannheimia succiniciproducens (strain KCTC 0769BP / MBEL55E)).